A 363-amino-acid chain; its full sequence is Probable endopolygalacturonase B (363 aa).

The first 20 residues, 1 to 20, serve as a signal peptide directing secretion; it reads MQLLQSSVIAATVGAALVAA. The propeptide occupies 21–28; it reads VPVELEAR. The cysteines at positions 31 and 46 are disulfide-linked. PbH1 repeat units lie at residues 158–187, 188–209, 210–230, 239–260, 268–290, and 302–347; these read SDNL…DVGS, STYI…AINS, GSHI…SIGS, VEDV…RIKT, VSNV…IVEQ, and TNGI…SITG. Asn162 carries N-linked (GlcNAc...) asparagine glycosylation. Residue Asp202 is the Proton donor of the active site. An intrachain disulfide couples Cys204 to Cys220. His224 is a catalytic residue. 2 disulfides stabilise this stretch: Cys330-Cys335 and Cys354-Cys363.

It belongs to the glycosyl hydrolase 28 family.

Its subcellular location is the secreted. It carries out the reaction (1,4-alpha-D-galacturonosyl)n+m + H2O = (1,4-alpha-D-galacturonosyl)n + (1,4-alpha-D-galacturonosyl)m.. Functionally, involved in maceration and soft-rotting of plant tissue. Hydrolyzes the 1,4-alpha glycosidic bonds of de-esterified pectate in the smooth region of the plant cell wall. This chain is Probable endopolygalacturonase B (pgaB), found in Aspergillus flavus (strain ATCC 200026 / FGSC A1120 / IAM 13836 / NRRL 3357 / JCM 12722 / SRRC 167).